The primary structure comprises 77 residues: EMBRYO SURROUNDING FACTOR 1-like protein 6 (77 aa).

The signal sequence occupies residues 1-25 (MSPSHFAILFIIVISLVPLHGYANG). 4 disulfide bridges follow: cysteine 38–cysteine 53, cysteine 43–cysteine 72, cysteine 51–cysteine 68, and cysteine 54–cysteine 61.

It belongs to the MEG family.

The protein is EMBRYO SURROUNDING FACTOR 1-like protein 6 (ESFL6) of Arabidopsis thaliana (Mouse-ear cress).